Reading from the N-terminus, the 1068-residue chain is Phosphatidylinositol 4,5-bisphosphate 3-kinase catalytic subunit alpha isoform (1068 aa).

The region spanning 16–105 (MPPRILVECL…QPFLKVIEPV (90 aa)) is the PI3K-ABD domain. The PI3K-RBD domain maps to 187-289 (KGQIIVVIWV…GRMPNLMLMA (103 aa)). Residues 330-487 (INSALRIKIL…DWFSSVVKFP (158 aa)) form the C2 PI3K-type domain. Positions 517–694 (LARDNELREN…GLLLESYCRA (178 aa)) constitute a PIK helical domain. One can recognise a PI3K/PI4K catalytic domain in the interval 765–1051 (RLEECRIMSS…QMNDAHHGGW (287 aa)). Residues 771-777 (IMSSAKR) form a G-loop region. Positions 912 to 920 (GIGDRHNSN) are catalytic loop. An activation loop region spans residues 931 to 957 (HIDFGHFLDHKKKKFGYKRERVPFVLT).

It belongs to the PI3/PI4-kinase family. In terms of assembly, heterodimer of a catalytic subunit PIK3CA and a p85 regulatory subunit (PIK3R1, PIK3R2 or PIK3R3). Interacts with IRS1 in nuclear extracts. Interacts with RUFY3. Interacts with RASD2. Interacts with APPL1. Interacts with HRAS and KRAS. Interaction with HRAS/KRAS is required for PI3K pathway signaling and cell proliferation stimulated by EGF and FGF2. Interacts with FAM83B; activates the PI3K/AKT signaling cascade.

The enzyme catalyses a 1,2-diacyl-sn-glycero-3-phospho-(1D-myo-inositol-4,5-bisphosphate) + ATP = a 1,2-diacyl-sn-glycero-3-phospho-(1D-myo-inositol-3,4,5-trisphosphate) + ADP + H(+). It carries out the reaction a 1,2-diacyl-sn-glycero-3-phospho-(1D-myo-inositol) + ATP = a 1,2-diacyl-sn-glycero-3-phospho-(1D-myo-inositol-3-phosphate) + ADP + H(+). The catalysed reaction is L-seryl-[protein] + ATP = O-phospho-L-seryl-[protein] + ADP + H(+). It catalyses the reaction 1,2-dioctanoyl-sn-glycero-3-phospho-(1D-myo-inositol-4,5-bisphosphate) + ATP = 1,2-dioctanoyl-sn-glycero-3-phospho-(1D-myo-inositol-3,4,5-trisphosphate) + ADP + H(+). The enzyme catalyses 1-octadecanoyl-2-(5Z,8Z,11Z,14Z)-eicosatetraenoyl-sn-glycero-3-phospho-1D-myo-inositol 4,5-bisphosphate + ATP = 1-octadecanoyl-2-(5Z,8Z,11Z,14Z-eicosatetraenoyl)-sn-glycero-3-phospho-(1D-myo-inositol 3,4,5-triphosphate) + ADP + H(+). Its pathway is phospholipid metabolism; phosphatidylinositol phosphate biosynthesis. Functionally, phosphoinositide-3-kinase (PI3K) phosphorylates phosphatidylinositol (PI) and its phosphorylated derivatives at position 3 of the inositol ring to produce 3-phosphoinositides. Uses ATP and PtdIns(4,5)P2 (phosphatidylinositol 4,5-bisphosphate) to generate phosphatidylinositol 3,4,5-trisphosphate (PIP3). PIP3 plays a key role by recruiting PH domain-containing proteins to the membrane, including AKT1 and PDPK1, activating signaling cascades involved in cell growth, survival, proliferation, motility and morphology. Participates in cellular signaling in response to various growth factors. Involved in the activation of AKT1 upon stimulation by receptor tyrosine kinases ligands such as EGF, insulin, IGF1, VEGFA and PDGF. Involved in signaling via insulin-receptor substrate (IRS) proteins. Essential in endothelial cell migration during vascular development through VEGFA signaling, possibly by regulating RhoA activity. Required for lymphatic vasculature development, possibly by binding to RAS and by activation by EGF and FGF2, but not by PDGF. Regulates invadopodia formation through the PDPK1-AKT1 pathway. Participates in cardiomyogenesis in embryonic stem cells through a AKT1 pathway. Participates in vasculogenesis in embryonic stem cells through PDK1 and protein kinase C pathway. Also has serine-protein kinase activity: phosphorylates PIK3R1 (p85alpha regulatory subunit), EIF4EBP1 and HRAS. Plays a role in the positive regulation of phagocytosis and pinocytosis. The polypeptide is Phosphatidylinositol 4,5-bisphosphate 3-kinase catalytic subunit alpha isoform (Pik3ca) (Mus musculus (Mouse)).